A 63-amino-acid polypeptide reads, in one-letter code: Serine protease inhibitor 3 (63 aa).

The signal sequence occupies residues M1–A23. 3 disulfide bridges follow: C24/C39, C34/C52, and C37/C47. Residues C24–S55 enclose the Pacifastin domain.

The protein belongs to the protease inhibitor I19 family. As to expression, expressed in hemolymph, ovaries, testes and fat body of adults but are absent in the gut. Also present in larval hemolymph and fat body.

It localises to the secreted. In vitro, active against alpha-chymotrypsin. This chain is Serine protease inhibitor 3, found in Schistocerca gregaria (Desert locust).